A 142-amino-acid chain; its full sequence is Small heat shock protein IbpB (142 aa).

A sHSP domain is found at 26–137 (AGESQSFPPY…AAQRIAISER (112 aa)).

Belongs to the small heat shock protein (HSP20) family. Homodimer. Forms homomultimers of about 100-150 subunits at optimal growth temperatures. Conformation changes to oligomers at high temperatures or high ionic concentrations. The decrease in size of the multimers is accompanied by an increase in chaperone activity.

Its subcellular location is the cytoplasm. Functionally, associates with aggregated proteins, together with IbpA, to stabilize and protect them from irreversible denaturation and extensive proteolysis during heat shock and oxidative stress. Aggregated proteins bound to the IbpAB complex are more efficiently refolded and reactivated by the ATP-dependent chaperone systems ClpB and DnaK/DnaJ/GrpE. Its activity is ATP-independent. This chain is Small heat shock protein IbpB, found in Escherichia coli O7:K1 (strain IAI39 / ExPEC).